We begin with the raw amino-acid sequence, 255 residues long: D-aminoacyl-tRNA deacylase (255 aa).

Belongs to the DtdA deacylase family. Monomer. Zn(2+) serves as cofactor.

It carries out the reaction a D-aminoacyl-tRNA + H2O = a tRNA + a D-alpha-amino acid + H(+). The enzyme catalyses glycyl-tRNA(Ala) + H2O = tRNA(Ala) + glycine + H(+). Its function is as follows. D-aminoacyl-tRNA deacylase with broad substrate specificity. By recycling D-aminoacyl-tRNA to D-amino acids and free tRNA molecules, this enzyme counteracts the toxicity associated with the formation of D-aminoacyl-tRNA entities in vivo. This Methanocaldococcus jannaschii (strain ATCC 43067 / DSM 2661 / JAL-1 / JCM 10045 / NBRC 100440) (Methanococcus jannaschii) protein is D-aminoacyl-tRNA deacylase.